We begin with the raw amino-acid sequence, 258 residues long: Ribosomal RNA large subunit methyltransferase E (258 aa).

S-adenosyl-L-methionine is bound by residues Gly58, Trp60, Asp78, Asp96, and Asp120. Lys160 functions as the Proton acceptor in the catalytic mechanism.

It belongs to the class I-like SAM-binding methyltransferase superfamily. RNA methyltransferase RlmE family.

It is found in the cytoplasm. The catalysed reaction is uridine(2552) in 23S rRNA + S-adenosyl-L-methionine = 2'-O-methyluridine(2552) in 23S rRNA + S-adenosyl-L-homocysteine + H(+). In terms of biological role, specifically methylates the uridine in position 2552 of 23S rRNA at the 2'-O position of the ribose in the fully assembled 50S ribosomal subunit. The polypeptide is Ribosomal RNA large subunit methyltransferase E (Methanococcus maripaludis (strain C5 / ATCC BAA-1333)).